The chain runs to 603 residues: Elongation factor 4 (603 aa).

In terms of domain architecture, tr-type G spans 2-184 (NHIRNFSIIA…AVVALIPAPK (183 aa)). GTP is bound by residues 14–19 (DHGKST) and 131–134 (NKMD).

It belongs to the TRAFAC class translation factor GTPase superfamily. Classic translation factor GTPase family. LepA subfamily.

The protein localises to the cell inner membrane. The enzyme catalyses GTP + H2O = GDP + phosphate + H(+). Its function is as follows. Required for accurate and efficient protein synthesis under certain stress conditions. May act as a fidelity factor of the translation reaction, by catalyzing a one-codon backward translocation of tRNAs on improperly translocated ribosomes. Back-translocation proceeds from a post-translocation (POST) complex to a pre-translocation (PRE) complex, thus giving elongation factor G a second chance to translocate the tRNAs correctly. Binds to ribosomes in a GTP-dependent manner. In Polaromonas naphthalenivorans (strain CJ2), this protein is Elongation factor 4.